The sequence spans 610 residues: Menin (610 aa).

The tract at residues 214–390 is interaction with FANCD2; the sequence is GVAERSWLYL…SLLEAGEERP (177 aa). Disordered regions lie at residues 385 to 404 and 460 to 552; these read AGEE…GSAL and REAE…PVLT. A compositionally biased stretch (low complexity) spans 393–402; that stretch reads QTQGTQSQGS. Over residues 484-500 the composition is skewed to basic and acidic residues; the sequence is RRESKPEEPPPPKKPAL. Position 487 is a phosphoserine (Ser-487). Pro residues-rich tracts occupy residues 512–521 and 537–548; these read PGPPRKPPGT and VPAPAASPPPEG. A Phosphoserine modification is found at Ser-543. The residue at position 594 (Thr-594) is a Phosphothreonine.

Component of the MLL-HCF complex, at least composed of KMT2A/MLL1, MEN1, ASH2L, RBBP5, DPY30, WDR5, HCFC1 and HCFC2. Component of the menin-associated histone methyltransferase complex, at least composed of KMT2B/MLL4, MEN1, ASH2L, RBBP5, DPY30 and WDR5. Interacts with POLR2B. Interacts with POLR2A phosphorylated at 'Ser-5', but not with the unphosphorylated, nor 'Ser-2' phosphorylated POLR2A forms. Interacts with FANCD2 and DBF4. Interacts with SMAD3, but not with SMAD2, nor SMAD4. Directly interacts with NFKB1, NFKB2 and RELA. Interacts with JUND (via MBM motif); inhibits the interaction of JUND with MAPK10 and the phosphorylation of JUND by MAP kinases MAPK8 and MAPK10. Interacts with KMT2A (via MBM motif). The KMT2A-MEN1 complex interacts with PSIP1 with a greater affinity as MEN1 enhances interaction of KMT2A with PSIP1.

Its subcellular location is the nucleus. Its function is as follows. Essential component of a MLL/SET1 histone methyltransferase (HMT) complex, a complex that specifically methylates 'Lys-4' of histone H3 (H3K4). Functions as a transcriptional regulator. Binds to the TERT promoter and represses telomerase expression. Plays a role in TGFB1-mediated inhibition of cell-proliferation, possibly regulating SMAD3 transcriptional activity. Represses JUND-mediated transcriptional activation on AP1 sites, as well as that mediated by NFKB subunit RELA. Positively regulates HOXC8 and HOXC6 gene expression. May be involved in normal hematopoiesis through the activation of HOXA9 expression. May be involved in DNA repair. The chain is Menin (MEN1) from Bos taurus (Bovine).